Consider the following 257-residue polypeptide: NAD-capped RNA hydrolase NudC (257 aa).

Arginine 69 serves as a coordination point for substrate. The Zn(2+) site is built by cysteine 98 and cysteine 101. Glutamate 111 provides a ligand contact to substrate. 2 residues coordinate Zn(2+): cysteine 116 and cysteine 119. Residue tyrosine 124 participates in substrate binding. The Nudix hydrolase domain maps to 125-248 (PQIAPCIIVA…TVARRLIEDT (124 aa)). Positions 158, 174, and 178 each coordinate a divalent metal cation. The Nudix box motif lies at 159–180 (GFVEVGETLEQAVAREVMEESG). 192–199 (QPWPFPQS) is a substrate binding site. A divalent metal cation is bound at residue glutamate 219. Alanine 241 is a substrate binding site.

The protein belongs to the Nudix hydrolase family. NudC subfamily. In terms of assembly, homodimer. The cofactor is Mg(2+). Requires Mn(2+) as cofactor. Zn(2+) is required as a cofactor.

The enzyme catalyses a 5'-end NAD(+)-phospho-ribonucleoside in mRNA + H2O = a 5'-end phospho-adenosine-phospho-ribonucleoside in mRNA + beta-nicotinamide D-ribonucleotide + 2 H(+). It carries out the reaction NAD(+) + H2O = beta-nicotinamide D-ribonucleotide + AMP + 2 H(+). The catalysed reaction is NADH + H2O = reduced beta-nicotinamide D-ribonucleotide + AMP + 2 H(+). Its function is as follows. mRNA decapping enzyme that specifically removes the nicotinamide adenine dinucleotide (NAD) cap from a subset of mRNAs by hydrolyzing the diphosphate linkage to produce nicotinamide mononucleotide (NMN) and 5' monophosphate mRNA. The NAD-cap is present at the 5'-end of some mRNAs and stabilizes RNA against 5'-processing. Has preference for mRNAs with a 5'-end purine. Catalyzes the hydrolysis of a broad range of dinucleotide pyrophosphates. The sequence is that of NAD-capped RNA hydrolase NudC from Salmonella agona (strain SL483).